Consider the following 987-residue polypeptide: Centrosomal protein of 120 kDa (987 aa).

Positions 1–112 (MVSKSDQLLI…QETKQAPKWY (112 aa)) constitute a C2 1 domain. Residues 352–408 (KTQNEHEPHHSKKRVLTPIKENTHTGPQSPSESPVPPHNQSPPTKDDATESEVESLL) form a disordered region. A C2 2 domain is found at 438–567 (SEAASGQKIA…LSSEKTRFLG (130 aa)). The stretch at 670–919 (ENQLKQKELA…RLRQQEQKQY (250 aa)) forms a coiled coil. A compositionally biased stretch (basic and acidic residues) spans 912–926 (RQQEQKQYPDSREIA). A disordered region spans residues 912–937 (RQQEQKQYPDSREIASGKMDGPHGSA). Ser-936 bears the Phosphoserine mark.

It belongs to the CEP120 family. In terms of assembly, interacts with TACC2 and TACC3. Interacts with CCDC52.

It localises to the cytoplasm. It is found in the cytoskeleton. Its subcellular location is the microtubule organizing center. The protein localises to the centrosome. Functionally, plays a role in the microtubule-dependent coupling of the nucleus and the centrosome. Involved in the processes that regulate centrosome-mediated interkinetic nuclear migration (INM) of neural progenitors and for proper positioning of neurons during brain development. Also implicated in the migration and selfrenewal of neural progenitors. May play a role in centriole duplication during mitosis. Required for the recruitment of CEP295 to the proximal end of new-born centrioles at the centriolar microtubule wall during early S phase in a PLK4-dependent manner. The chain is Centrosomal protein of 120 kDa (CEP120) from Bos taurus (Bovine).